The chain runs to 114 residues: MSDDVALPLQFTDAAANKVKSLIADEDNPNLKLRVYITGGGCSGFQYGFTFDDQVNEGDMTIEKQGVGLVVDPMSLQYLVGGSVDYTEGLEGSRFIVTNPNAKSTCGCGSSFSI.

The iron-sulfur cluster site is built by C42, C106, and C108.

This sequence belongs to the HesB/IscA family. In terms of assembly, homodimer. Iron-sulfur cluster serves as cofactor.

Functionally, required for insertion of 4Fe-4S clusters for at least IspG. The sequence is that of Iron-sulfur cluster insertion protein ErpA from Salmonella typhi.